Consider the following 415-residue polypeptide: S-inosyl-L-homocysteine hydrolase (415 aa).

Asp123 and Glu148 together coordinate substrate. 149 to 151 (TTT) provides a ligand contact to NAD(+). Lys178 and Asp182 together coordinate substrate. Residues Asn183, 212–217 (GYGWCG), Glu235, 291–293 (AGH), and Asn337 contribute to the NAD(+) site.

The protein belongs to the adenosylhomocysteinase family. It depends on NAD(+) as a cofactor.

It is found in the cytoplasm. It carries out the reaction S-inosyl-L-homocysteine + H2O = L-homocysteine + inosine. Its pathway is amino-acid biosynthesis; S-adenosyl-L-methionine biosynthesis. Catalyzes the hydrolysis of S-inosyl-L-homocysteine (SIH) to L-homocysteine (Hcy) and inosine. Likely functions in a S-adenosyl-L-methionine (SAM) recycling pathway from S-adenosyl-L-homocysteine (SAH) produced from SAM-dependent methylation reactions. Can also catalyze the reverse reaction in vitro, i.e. the synthesis of SIH from Hcy and inosine. The chain is S-inosyl-L-homocysteine hydrolase from Methanococcus maripaludis (strain DSM 14266 / JCM 13030 / NBRC 101832 / S2 / LL).